The primary structure comprises 371 residues: O-antigen chain mannosyltransferase C (371 aa).

Belongs to the glycosyltransferase group 1 family. Glycosyltransferase 4 subfamily.

The enzyme catalyses N-acetyl-alpha-D-glucosaminyl-di-trans,octa-cis-undecaprenyl diphosphate + GDP-alpha-D-mannose = alpha-D-mannosyl-(1-&gt;3)-N-acetyl-alpha-D-glucosaminyl-di-trans,octa-cis-undecaprenyl diphosphate + GDP + H(+). The protein operates within bacterial outer membrane biogenesis; LPS O-antigen biosynthesis. In terms of biological role, mannosyltransferase involved in the biosynthesis of the repeat unit of the lipopolysaccharide (LPS) O-antigen region. Catalyzes the transfer of a single alpha-(1-&gt;3)-linked mannose residue to the acceptor N-acetyl-glucosaminyl-diphospho-undecaprenol during the synthesis of the adapter region. The sequence is that of O-antigen chain mannosyltransferase C from Escherichia coli.